The chain runs to 144 residues: Large ribosomal subunit protein uL15 (144 aa).

A disordered region spans residues methionine 1 to glutamine 54. Over residues arginine 21 to alanine 31 the composition is skewed to gly residues.

The protein belongs to the universal ribosomal protein uL15 family. Part of the 50S ribosomal subunit.

Its function is as follows. Binds to the 23S rRNA. In Saccharophagus degradans (strain 2-40 / ATCC 43961 / DSM 17024), this protein is Large ribosomal subunit protein uL15.